Here is a 389-residue protein sequence, read N- to C-terminus: Probable tRNA sulfurtransferase (389 aa).

The 109-residue stretch at Asp-57 to Val-165 folds into the THUMP domain. ATP-binding positions include Leu-183 to Leu-184, Lys-267, Gly-289, and Gln-298.

The protein belongs to the ThiI family.

Its subcellular location is the cytoplasm. It catalyses the reaction [ThiI sulfur-carrier protein]-S-sulfanyl-L-cysteine + a uridine in tRNA + 2 reduced [2Fe-2S]-[ferredoxin] + ATP + H(+) = [ThiI sulfur-carrier protein]-L-cysteine + a 4-thiouridine in tRNA + 2 oxidized [2Fe-2S]-[ferredoxin] + AMP + diphosphate. The catalysed reaction is [ThiS sulfur-carrier protein]-C-terminal Gly-Gly-AMP + S-sulfanyl-L-cysteinyl-[cysteine desulfurase] + AH2 = [ThiS sulfur-carrier protein]-C-terminal-Gly-aminoethanethioate + L-cysteinyl-[cysteine desulfurase] + A + AMP + 2 H(+). It functions in the pathway cofactor biosynthesis; thiamine diphosphate biosynthesis. Catalyzes the ATP-dependent transfer of a sulfur to tRNA to produce 4-thiouridine in position 8 of tRNAs, which functions as a near-UV photosensor. Also catalyzes the transfer of sulfur to the sulfur carrier protein ThiS, forming ThiS-thiocarboxylate. This is a step in the synthesis of thiazole, in the thiamine biosynthesis pathway. The sulfur is donated as persulfide by IscS. This chain is Probable tRNA sulfurtransferase, found in Methanothermobacter thermautotrophicus (strain ATCC 29096 / DSM 1053 / JCM 10044 / NBRC 100330 / Delta H) (Methanobacterium thermoautotrophicum).